The sequence spans 445 residues: Endoplasmic reticulum membrane adapter protein XK (445 aa).

Topologically, residues 1–2 (MK) are cytoplasmic. A helical membrane pass occupies residues 3–23 (FPASVLASVFLFVAETMAALY). Residues 24-37 (LSSTYRSAGDRMWQ) lie on the Extracellular side of the membrane. A helical membrane pass occupies residues 38–58 (ALTLFFSLMPCTLVQLTLLFV). Residues 59-68 (HRDLSRDRPL) lie on the Cytoplasmic side of the membrane. The helical transmembrane segment at 69–89 (VLLMHLLQLGPLYRCCEVFCI) threads the bilayer. Topologically, residues 90-140 (YCQSDQNEEPYVSITKKRQMPKDGLSEEVEKEVGQSEGKLFTHRSAFSRAS) are extracellular. Residue Ser115 is modified to Phosphoserine. The helical transmembrane segment at 141-161 (VIQAFLGSAPQLTLQLYITVL) threads the bilayer. Residues 162 to 170 (EQNITTGRF) are Cytoplasmic-facing. Residues 171 to 191 (IMVLSLLSIVYGALRCNILAI) traverse the membrane as a helical segment. At 192 to 207 (KIKYDEYEVKVKPLAY) the chain is on the extracellular side. A helical membrane pass occupies residues 208-228 (VCIFLWRSFEIATRVIVLVLF). Topologically, residues 229–234 (TSVLKI) are cytoplasmic. A helical membrane pass occupies residues 235–255 (WVVVVILVNFFSFFLYPWILF). The Extracellular segment spans residues 256-276 (WNSGSPFPENIEKALTRVGTT). A helical membrane pass occupies residues 277 to 297 (IVLGFLTLLYAGINMFCWSAV). At 298–316 (QLKIDNPELISKSQNWYRL) the chain is on the cytoplasmic side. The helical transmembrane segment at 317-337 (LIYYMMRFVENSVLLLLWFFF) threads the bilayer. The Extracellular segment spans residues 338–348 (KTDIYMYVCAP). Residues 349 to 369 (LLILQLLIGYCTSILFMLVFY) traverse the membrane as a helical segment. Residues 370–445 (QFFHPCKKLF…IWTAVDLCST (76 aa)) lie on the Cytoplasmic side of the membrane.

This sequence belongs to the XK family. In terms of assembly, heterodimer with Kell; disulfide-linked. Interacts with VPS13A.

The protein resides in the endoplasmic reticulum membrane. Its function is as follows. Recruits the lipid transfer protein VPS13A from lipid droplets to the endoplasmic reticulum (ER) membrane. The protein is Endoplasmic reticulum membrane adapter protein XK of Rattus norvegicus (Rat).